The following is a 158-amino-acid chain: Large ribosomal subunit protein bL21 (158 aa).

The disordered stretch occupies residues 106–158 (SKPKKAAAKPIKEEATAAKGTKDTAVEKKAEKTAEKKTASQKKAAVASKSKKD). A compositionally biased stretch (basic and acidic residues) spans 115-143 (PIKEEATAAKGTKDTAVEKKAEKTAEKKT). Residues 146 to 158 (QKKAAVASKSKKD) are compositionally biased toward low complexity.

This sequence belongs to the bacterial ribosomal protein bL21 family. As to quaternary structure, part of the 50S ribosomal subunit. Contacts protein L20.

This protein binds to 23S rRNA in the presence of protein L20. This chain is Large ribosomal subunit protein bL21, found in Bartonella tribocorum (strain CIP 105476 / IBS 506).